We begin with the raw amino-acid sequence, 328 residues long: MSSEMLPASIESPNVEEKLGTSDGEEERQEPRVDAGAEPISKRQLKKLMKQKQWEEQREQRKEKRKEKRKRKKLERRQLESNSDGNDRKRVRRDVARSSLRLVIDCSFDDLMVLKDIKKLHKQIQRCYAENRRASHPVQFYLTSHGGQLKKNMDENDQGWVNWKDIHIKSEHYSELIKKEDLVYLTSDSPNVLKDLDESKAYVIGGLVDHSHHKGLTFKQATSYGIEHAQLPLADFVKMNSRKVLAVNHVFEIILEFLETRDWQEAFFTILPQRKGAVPAHKACESSPQDHQSLPEGWDSASEGESCRDNPDSPQKDEQGQQSSPVLQ.

Disordered stretches follow at residues 1 to 91 (MSSE…RKRV) and 281 to 328 (HKAC…PVLQ). Position 22 is a phosphoserine (serine 22). A coiled-coil region spans residues 43 to 83 (RQLKKLMKQKQWEEQREQRKEKRKEKRKRKKLERRQLESNS). A compositionally biased stretch (basic and acidic residues) spans 52–62 (KQWEEQREQRK). Basic residues predominate over residues 63 to 75 (EKRKEKRKRKKLE). An SAM-dependent MTase TRM10-type domain is found at 88 to 278 (RKRVRRDVAR…TILPQRKGAV (191 aa)). The span at 305–319 (ESCRDNPDSPQKDEQ) shows a compositional bias: basic and acidic residues.

Belongs to the class IV-like SAM-binding methyltransferase superfamily. TRM10 family. In terms of assembly, interacts with tRNA.

It localises to the nucleus. Its subcellular location is the nucleolus. It catalyses the reaction guanosine(9) in tRNA + S-adenosyl-L-methionine = N(1)-methylguanosine(9) in tRNA + S-adenosyl-L-homocysteine + H(+). Functionally, S-adenosyl-L-methionine-dependent guanine N(1)-methyltransferase that catalyzes the formation of N(1)-methylguanine at position 9 (m1G9) in tRNAs. Probably not able to catalyze formation of N(1)-methyladenine at position 9 (m1A9) in tRNAs. The chain is tRNA methyltransferase 10 homolog A (Trmt10a) from Mus musculus (Mouse).